Reading from the N-terminus, the 292-residue chain is Protease HtpX homolog (292 aa).

2 helical membrane passes run 9–29 (TGVL…VLGN) and 31–51 (TGMM…YWYS). His133 contacts Zn(2+). Glu134 is an active-site residue. His137 provides a ligand contact to Zn(2+). Helical transmembrane passes span 148-168 (LAAV…WMLW) and 185-205 (LGAI…QMAI). Position 210 (Glu210) interacts with Zn(2+).

The protein belongs to the peptidase M48B family. Zn(2+) is required as a cofactor.

It is found in the cell membrane. This Thermococcus sibiricus (strain DSM 12597 / MM 739) protein is Protease HtpX homolog.